The sequence spans 329 residues: DNA repair protein RAD51 homolog 4 (329 aa).

The segment at 1-83 is preferentially binds ssDNA; that stretch reads MGMLRAGLCP…ELKTSTAILS (83 aa). Residues 4 to 77 form an interaction with XRCC2 region; the sequence is LRAGLCPGLT…GADLYEELKT (74 aa). Positions 77 to 328 are interaction with RAD51C; the sequence is TSTAILSTGI…EQSPELPGKQ (252 aa). 107–114 is an ATP binding site; the sequence is GGPGSGKT.

The protein belongs to the RecA family. RAD51 subfamily. Part of the BCDX2 complex consisting of RAD51B, RAD51C, RAD51D and XRCC2; the complex has a ring-like structure arranged into a flat disc around a central channel. In the absence of DNA, the BCDX2 subcomplex XRCC2:RAD51D formed a multimeric ring structure; in the presence of single-stranded DNA it formed a filamentous structure with the ssDNA. Interacts with SWSAP1 and ZSWIM7; involved in homologous recombination repair. Interacts with BLM; required for stimulation of BLM activity by the BCDX2 subcomplex XRCC2:RAD51D. As to expression, highly expressed in brain followed by testis. Also expressed in heart, liver, kidney, spleen, lung and skeletal muscle.

It localises to the nucleus. The protein localises to the chromosome. Its subcellular location is the telomere. Involved in the homologous recombination repair (HRR) pathway of double-stranded DNA breaks arising during DNA replication or induced by DNA-damaging agents. Bind to single-stranded DNA (ssDNA) and has DNA-dependent ATPase activity. Part of the RAD51 paralog protein complex BCDX2 which acts in the BRCA1-BRCA2-dependent HR pathway. Upon DNA damage, BCDX2 acts downstream of BRCA2 recruitment and upstream of RAD51 recruitment. BCDX2 binds predominantly to the intersection of the four duplex arms of the Holliday junction and to junction of replication forks. The BCDX2 complex was originally reported to bind single-stranded DNA, single-stranded gaps in duplex DNA and specifically to nicks in duplex DNA. Involved in telomere maintenance. The BCDX2 subcomplex XRCC2:RAD51D can stimulate Holliday junction resolution by BLM. The sequence is that of DNA repair protein RAD51 homolog 4 (Rad51d) from Mus musculus (Mouse).